The primary structure comprises 176 residues: Mitochondrial inner membrane protein Mpv17 (176 aa).

Helical transmembrane passes span 18–38 (VQVL…QQLV), 53–73 (TMVS…YKVL), 94–114 (GGFA…LNGL), and 131–151 (LITN…LVPL).

Belongs to the peroxisomal membrane protein PXMP2/4 family. In terms of tissue distribution, ubiquitous. Expressed in pancreas, kidney, muscle, liver, lung, placenta, brain and heart.

Its subcellular location is the mitochondrion inner membrane. In terms of biological role, non-selective channel that modulates the membrane potential under normal conditions and oxidative stress, and is involved in mitochondrial homeostasis. Involved in mitochondrial deoxynucleoside triphosphates (dNTP) pool homeostasis and mitochondrial DNA (mtDNA) maintenance. May be involved in the regulation of reactive oxygen species metabolism and the control of oxidative phosphorylation. The chain is Mitochondrial inner membrane protein Mpv17 from Homo sapiens (Human).